The sequence spans 113 residues: Dynein light chain Tctex-type 1 (113 aa).

M1 carries the N-acetylmethionine modification. Positions 41–113 (QWTTNVVEQT…CIVSAFGLSI (73 aa)) are interaction with GNB1.

It belongs to the dynein light chain Tctex-type family. In terms of assembly, homodimer. The cytoplasmic dynein 1 complex consists of two catalytic heavy chains (HCs) and a number of non-catalytic subunits presented by intermediate chains (ICs), light intermediate chains (LICs) and light chains (LCs); the composition seems to vary in respect to the IC, LIC and LC composition. The heavy chain homodimer serves as a scaffold for the probable homodimeric assembly of the non-catalytic subunits. The ICs and LICs bind directly to the HC dimer and the LCs assemble on the IC dimer. DYNLT1 and DYNLT3 compete for association with dynein IC (DYNC1I1 or DYNC1I2). Self-associates. Interacts with RHO. Interacts with DYNC1I1 and DYNC1I2. Interacts with DOC2A, DOC2B and SCN10A. Interacts with PVR. Interacts with SVIL isoform 2. Interacts with GNB1; the interaction occurs in presence of guanine nucleotide-binding protein G(T) subunit gamma; the interaction diminishes the association of DYNLT1 with dynein IC (DYNC1I1 or DYNC1I2). Interacts with GNB2, GNB3 and GNB5; the interactions occur in presence of guanine nucleotide-binding protein G(T) subunit gamma. Interacts with ACVR2B and ARHGEF2. Interacts with DNAI4. Interacts with CFAP61. Post-translationally, phosphorylated by BMPR2. The phosphorylation status is proposed to regulate the association with the cytoplasmic dynein complex and may have role in cytoplasmic dynein cargo release.

The protein localises to the golgi apparatus. The protein resides in the cytoplasm. Its subcellular location is the cytoskeleton. It localises to the spindle. Acts as one of several non-catalytic accessory components of the cytoplasmic dynein 1 complex that are thought to be involved in linking dynein to cargos and to adapter proteins that regulate dynein function. Cytoplasmic dynein 1 acts as a motor for the intracellular retrograde motility of vesicles and organelles along microtubules. Binds to transport cargos and is involved in apical cargo transport such as rhodopsin-bearing vesicles in polarized epithelia. May also be a accessory component of axonemal dynein. Its function is as follows. Plays a role in neuronal morphogenesis; the function is independent of cytoplasmic dynein and seems to be coupled to regulation of the actin cytoskeleton by enhancing Rac1 activity. The function in neurogenesis may be regulated by association with a G-protein beta-gamma dimer. May function as a receptor-independent activator of heterotrimeric G-protein signaling; the activation appears to be independent of a nucleotide exchange. Plays a role in regulating neurogenesis; inhibits the genesis of neurons from precursor cells during cortical development presumably by antagonizing ARHGEF2. Involved in the regulation of mitotic spindle orientation. Unrelated to the role in retrograde microtubule-associated movement may play a role in the dimerization of cytoplasmic proteins/domains such as for ACVR2B. Binds to the cytoplasmic domain of ACVR2B and, in vitro, inhibits ACVR2B signaling. The sequence is that of Dynein light chain Tctex-type 1 (DYNLT1) from Bos taurus (Bovine).